The sequence spans 375 residues: POU domain, class 3, transcription factor 1-B (375 aa).

3 disordered regions span residues 1 to 29 (MAAT…RMHQ), 56 to 139 (MSLT…QPLI), and 151 to 200 (MLGP…PSSD). Polar residues-rich tracts occupy residues 107–117 (VHQQTPSSHAW), 129–139 (SPGSNSHQPLI), and 151–160 (MLGPQASSLH). Residues 162-178 (SMRDPLHDDPGVHDTHV) are compositionally biased toward basic and acidic residues. Positions 194–268 (EDAPSSDDLE…LLNKWLEETD (75 aa)) constitute a POU-specific domain. The homeobox DNA-binding region spans 286–345 (KRKKRTSIEVGVKGALENHFLKCPKPSAHEITSLADSLQLEKEVVRVWFCNRRQKEKRMT).

This sequence belongs to the POU transcription factor family. Class-3 subfamily.

It localises to the nucleus. Functionally, acts as a transcription factor. May play a role in neuronal differentiation. In Xenopus laevis (African clawed frog), this protein is POU domain, class 3, transcription factor 1-B (pou3f1-b).